A 93-amino-acid polypeptide reads, in one-letter code: uncharacterized protein (93 aa).

This is an uncharacterized protein from Gallid herpesvirus 2 (strain Chicken/Md5/ATCC VR-987) (GaHV-2).